Consider the following 444-residue polypeptide: Ribitol-5-phosphate xylosyltransferase 1 (444 aa).

The Cytoplasmic segment spans residues M1–C9. The helical; Signal-anchor for type II membrane protein transmembrane segment at S10–G30 threads the bilayer. Topologically, residues R31–V444 are extracellular. A disordered region spans residues T38 to R79. A compositionally biased stretch (basic and acidic residues) spans A51–S60.

Belongs to the RXYLT1 family. As to quaternary structure, forms a complex composed of FKTN/fukutin, FKRP and RXYLT1/TMEM5.

The protein resides in the golgi apparatus membrane. The enzyme catalyses 3-O-[Rib-ol-P-Rib-ol-P-3-beta-D-GalNAc-(1-&gt;3)-beta-D-GlcNAc-(1-&gt;4)-(O-6-P-alpha-D-Man)]-Thr-[protein] + UDP-alpha-D-xylose = 3-O-[beta-D-Xyl-(1-&gt;4)-Rib-ol-P-Rib-ol-P-3-beta-D-GalNAc-(1-&gt;3)-beta-D-GlcNAc-(1-&gt;4)-(O-6-P-alpha-D-Man)]-Thr-[protein] + UDP + H(+). It functions in the pathway protein modification; protein glycosylation. Acts as a UDP-D-xylose:ribitol-5-phosphate beta1,4-xylosyltransferase, which catalyzes the transfer of UDP-D-xylose to ribitol 5-phosphate (Rbo5P) to form the Xylbeta1-4Rbo5P linkage on O-mannosyl glycan. Participates in the biosynthesis of the phosphorylated O-mannosyl trisaccharide (N-acetylgalactosamine-beta-3-N-acetylglucosamine-beta-4-(phosphate-6-)mannose), a carbohydrate structure present in alpha-dystroglycan (DAG1), which is required for binding laminin G-like domain-containing extracellular proteins with high affinity. This Mus musculus (Mouse) protein is Ribitol-5-phosphate xylosyltransferase 1.